We begin with the raw amino-acid sequence, 395 residues long: THP3 homolog C2A9.11c (395 aa).

A disordered region spans residues 91-127 (LLSEEDEVDKKEKRRRRFENGSRSQNNAKSEELKVNP). Positions 218 to 384 (DVGEYNQCQT…STDRFEKCMK (167 aa)) constitute a PCI domain.

Belongs to the THP3 family.

The protein localises to the cytoplasm. It is found in the nucleus. Required for transcription elongation. May also be involved in pre-mRNA splicing. The polypeptide is THP3 homolog C2A9.11c (Schizosaccharomyces pombe (strain 972 / ATCC 24843) (Fission yeast)).